The chain runs to 307 residues: 4-hydroxythreonine-4-phosphate dehydrogenase (307 aa).

Substrate-binding residues include histidine 126 and threonine 127. Histidine 156, histidine 195, and histidine 251 together coordinate a divalent metal cation. Substrate contacts are provided by lysine 259, asparagine 268, and arginine 277.

Belongs to the PdxA family. Homodimer. The cofactor is Zn(2+). Requires Mg(2+) as cofactor. Co(2+) serves as cofactor.

The protein localises to the cytoplasm. It carries out the reaction 4-(phosphooxy)-L-threonine + NAD(+) = 3-amino-2-oxopropyl phosphate + CO2 + NADH. Its pathway is cofactor biosynthesis; pyridoxine 5'-phosphate biosynthesis; pyridoxine 5'-phosphate from D-erythrose 4-phosphate: step 4/5. Functionally, catalyzes the NAD(P)-dependent oxidation of 4-(phosphooxy)-L-threonine (HTP) into 2-amino-3-oxo-4-(phosphooxy)butyric acid which spontaneously decarboxylates to form 3-amino-2-oxopropyl phosphate (AHAP). In Helicobacter pylori (strain J99 / ATCC 700824) (Campylobacter pylori J99), this protein is 4-hydroxythreonine-4-phosphate dehydrogenase.